A 431-amino-acid polypeptide reads, in one-letter code: MRKLRRLVHMVLFCPISKGLQSRLPGIKVKYLFLAWLSVFVGSWVVYMHYSSYSELCRGHVCRMIICDQYKKGIISGSACKDLCDERTLVFQQCLSSSPTQQVYSGRWRDREVIIKCGVEETLKADSNPDSPPRRELVLFDKPTRGTSMDEFKEMLGNFLKANLGEQVSLTALVSQILTMADVNNDGKVSLAEAKSIWALLHLNEILLMLSLREKEHTSQLLGHCGDLYVTEKIPHDSLYGSQIPGFLQTLLPSPVHRLVHQWCAPAWPRRAKIAIGLLEFVEEIFHGTYGSFFICDSSFKNIGYNEKYDFKVVDLRKVATEMTIRGFLKGRHCEQNSDCTFGSDCTAACDKLMKQCRNDVIQPNLAKACQLLQDYLLYGSPSDLREELQKQLRTCMTLSGLASQMEVHHSLILNNLKTLLWKKISNTKYS.

Over 1 to 30 (MRKLRRLVHMVLFCPISKGLQSRLPGIKVK) the chain is Cytoplasmic. The short motif at 5–6 (RR) is the May mediate ER retention element. Residues 31–51 (YLFLAWLSVFVGSWVVYMHYS) traverse the membrane as a helical segment. Residues 52–431 (SYSELCRGHV…WKKISNTKYS (380 aa)) are Lumenal-facing. 2 cysteine pairs are disulfide-bonded: cysteine 57–cysteine 94 and cysteine 62–cysteine 117.

This sequence belongs to the DIPK family. Post-translationally, among the many cysteines in the lumenal domain, most are probably involved in disulfide bonds.

It is found in the endoplasmic reticulum membrane. In Xenopus tropicalis (Western clawed frog), this protein is Divergent protein kinase domain 1B (dipk1b).